A 502-amino-acid chain; its full sequence is Probable cytosol aminopeptidase (502 aa).

2 residues coordinate Mn(2+): lysine 270 and aspartate 275. Lysine 282 is a catalytic residue. Residues aspartate 293, aspartate 352, and glutamate 354 each contribute to the Mn(2+) site. Arginine 356 is an active-site residue.

Belongs to the peptidase M17 family. The cofactor is Mn(2+).

The protein resides in the cytoplasm. It catalyses the reaction Release of an N-terminal amino acid, Xaa-|-Yaa-, in which Xaa is preferably Leu, but may be other amino acids including Pro although not Arg or Lys, and Yaa may be Pro. Amino acid amides and methyl esters are also readily hydrolyzed, but rates on arylamides are exceedingly low.. The catalysed reaction is Release of an N-terminal amino acid, preferentially leucine, but not glutamic or aspartic acids.. Presumably involved in the processing and regular turnover of intracellular proteins. Catalyzes the removal of unsubstituted N-terminal amino acids from various peptides. The sequence is that of Probable cytosol aminopeptidase from Desulfotalea psychrophila (strain LSv54 / DSM 12343).